The chain runs to 174 residues: Co-chaperone protein HscB (174 aa).

The J domain maps to 2 to 74 (DYFTLFGLPA…LKRAEYMLSL (73 aa)).

It belongs to the HscB family. As to quaternary structure, interacts with HscA and stimulates its ATPase activity. Interacts with IscU.

Functionally, co-chaperone involved in the maturation of iron-sulfur cluster-containing proteins. Seems to help targeting proteins to be folded toward HscA. The protein is Co-chaperone protein HscB of Yersinia pestis bv. Antiqua (strain Antiqua).